Consider the following 201-residue polypeptide: Small ribosomal subunit protein uS4c (201 aa).

The region spanning 89–152 (MRLDNILFRL…NSRTLVQNLL (64 aa)) is the S4 RNA-binding domain.

Belongs to the universal ribosomal protein uS4 family. In terms of assembly, part of the 30S ribosomal subunit. Contacts protein S5. The interaction surface between S4 and S5 is involved in control of translational fidelity.

The protein localises to the plastid. It is found in the chloroplast. Functionally, one of the primary rRNA binding proteins, it binds directly to 16S rRNA where it nucleates assembly of the body of the 30S subunit. With S5 and S12 plays an important role in translational accuracy. This Capsella bursa-pastoris (Shepherd's purse) protein is Small ribosomal subunit protein uS4c (rps4).